The primary structure comprises 222 residues: Holliday junction branch migration complex subunit RuvA (222 aa).

The interval 1 to 67 (MISWLNGLKI…EDGSQLIGFL (67 aa)) is domain I. Positions 68-146 (NKLERDLFRK…DLIGSSLKKT (79 aa)) are domain II. The segment at 147 to 155 (NNHLELEYE) is flexible linker. Residues 155-222 (ETNVADEVRS…TLIRINTESG (68 aa)) are domain III.

Belongs to the RuvA family. Homotetramer. Forms an RuvA(8)-RuvB(12)-Holliday junction (HJ) complex. HJ DNA is sandwiched between 2 RuvA tetramers; dsDNA enters through RuvA and exits via RuvB. An RuvB hexamer assembles on each DNA strand where it exits the tetramer. Each RuvB hexamer is contacted by two RuvA subunits (via domain III) on 2 adjacent RuvB subunits; this complex drives branch migration. In the full resolvosome a probable DNA-RuvA(4)-RuvB(12)-RuvC(2) complex forms which resolves the HJ.

The protein localises to the cytoplasm. In terms of biological role, the RuvA-RuvB-RuvC complex processes Holliday junction (HJ) DNA during genetic recombination and DNA repair, while the RuvA-RuvB complex plays an important role in the rescue of blocked DNA replication forks via replication fork reversal (RFR). RuvA specifically binds to HJ cruciform DNA, conferring on it an open structure. The RuvB hexamer acts as an ATP-dependent pump, pulling dsDNA into and through the RuvAB complex. HJ branch migration allows RuvC to scan DNA until it finds its consensus sequence, where it cleaves and resolves the cruciform DNA. This Prochlorococcus marinus (strain SARG / CCMP1375 / SS120) protein is Holliday junction branch migration complex subunit RuvA.